Reading from the N-terminus, the 826-residue chain is Ribosome-releasing factor 2, mitochondrial (826 aa).

Residues 1 to 44 constitute a mitochondrion transit peptide; the sequence is MIVRNLLGKNRLCCLQPKLLLSTLSQRPQLQLSLQLLCRATRLY. The tr-type G domain occupies 53 to 340; that stretch reads PKTRNIGIIA…GITNYLPSPL (288 aa). Residues 62–69, 126–130, and 180–183 each bind GTP; these read AHIDAGKT, DTPGH, and NKMD.

The protein belongs to the TRAFAC class translation factor GTPase superfamily. Classic translation factor GTPase family. EF-G/EF-2 subfamily.

Its subcellular location is the mitochondrion. Mitochondrial GTPase that mediates the disassembly of ribosomes from messenger RNA at the termination of mitochondrial protein biosynthesis. Not involved in the GTP-dependent ribosomal translocation step during translation elongation. The protein is Ribosome-releasing factor 2, mitochondrial of Lodderomyces elongisporus (strain ATCC 11503 / CBS 2605 / JCM 1781 / NBRC 1676 / NRRL YB-4239) (Yeast).